We begin with the raw amino-acid sequence, 166 residues long: Prorelaxin H1 (166 aa).

An N-terminal signal peptide occupies residues 1–5; the sequence is SRAVA. Intrachain disulfides connect cysteine 16–cysteine 153, cysteine 28–cysteine 166, and cysteine 152–cysteine 157. The propeptide at 37-139 is connecting peptide; sequence SLSQEDAPQT…KYLGLDTHSQ (103 aa).

This sequence belongs to the insulin family. Heterodimer of a B chain and an A chain linked by two disulfide bonds. Expressed in the corpus luteum of pregnancy but not in the placenta.

The protein localises to the secreted. Functionally, relaxin is an ovarian hormone that acts with estrogen to produce dilatation of the birth canal in many mammals. May be involved in remodeling of connective tissues during pregnancy, promoting growth of pubic ligaments and ripening of the cervix. In Pan troglodytes (Chimpanzee), this protein is Prorelaxin H1 (RNL1).